We begin with the raw amino-acid sequence, 725 residues long: Phosphoribosylformylglycinamidine synthase subunit PurL (725 aa).

H34 is a catalytic residue. Y37 contributes to the ATP binding site. Mg(2+) is bound at residue E93. Substrate is bound by residues 94–97 (SHNH) and R116. The active-site Proton acceptor is the H95. Residue D117 participates in Mg(2+) binding. Residues 220-241 (GASFASEDLSEDAETEDRPAVQ) are disordered. Q241 serves as a coordination point for substrate. D269 contacts Mg(2+). 313–315 (ESQ) contributes to the substrate binding site. D489 and G526 together coordinate ATP. N527 provides a ligand contact to Mg(2+). S529 contributes to the substrate binding site.

This sequence belongs to the FGAMS family. As to quaternary structure, monomer. Part of the FGAM synthase complex composed of 1 PurL, 1 PurQ and 2 PurS subunits.

It is found in the cytoplasm. The catalysed reaction is N(2)-formyl-N(1)-(5-phospho-beta-D-ribosyl)glycinamide + L-glutamine + ATP + H2O = 2-formamido-N(1)-(5-O-phospho-beta-D-ribosyl)acetamidine + L-glutamate + ADP + phosphate + H(+). It participates in purine metabolism; IMP biosynthesis via de novo pathway; 5-amino-1-(5-phospho-D-ribosyl)imidazole from N(2)-formyl-N(1)-(5-phospho-D-ribosyl)glycinamide: step 1/2. Functionally, part of the phosphoribosylformylglycinamidine synthase complex involved in the purines biosynthetic pathway. Catalyzes the ATP-dependent conversion of formylglycinamide ribonucleotide (FGAR) and glutamine to yield formylglycinamidine ribonucleotide (FGAM) and glutamate. The FGAM synthase complex is composed of three subunits. PurQ produces an ammonia molecule by converting glutamine to glutamate. PurL transfers the ammonia molecule to FGAR to form FGAM in an ATP-dependent manner. PurS interacts with PurQ and PurL and is thought to assist in the transfer of the ammonia molecule from PurQ to PurL. The sequence is that of Phosphoribosylformylglycinamidine synthase subunit PurL from Haloquadratum walsbyi (strain DSM 16790 / HBSQ001).